A 158-amino-acid polypeptide reads, in one-letter code: MNKKKNAPVRKIIADNRKARFNYEILDNLEAGLVLQGAEVKSLRSNHANIAESYASFENGELWLVNSYIPEYTQANRFNHEPRRLRKLLISKREMARFFNATSREGMTLVPLKLYFNERGRAKLEIALARGKKLHDKRETEKKRDWGREKARLLKRYG.

The protein belongs to the SmpB family.

Its subcellular location is the cytoplasm. In terms of biological role, required for rescue of stalled ribosomes mediated by trans-translation. Binds to transfer-messenger RNA (tmRNA), required for stable association of tmRNA with ribosomes. tmRNA and SmpB together mimic tRNA shape, replacing the anticodon stem-loop with SmpB. tmRNA is encoded by the ssrA gene; the 2 termini fold to resemble tRNA(Ala) and it encodes a 'tag peptide', a short internal open reading frame. During trans-translation Ala-aminoacylated tmRNA acts like a tRNA, entering the A-site of stalled ribosomes, displacing the stalled mRNA. The ribosome then switches to translate the ORF on the tmRNA; the nascent peptide is terminated with the 'tag peptide' encoded by the tmRNA and targeted for degradation. The ribosome is freed to recommence translation, which seems to be the essential function of trans-translation. The sequence is that of SsrA-binding protein from Bartonella henselae (strain ATCC 49882 / DSM 28221 / CCUG 30454 / Houston 1) (Rochalimaea henselae).